The chain runs to 154 residues: Large ribosomal subunit protein uL30 (154 aa).

Belongs to the universal ribosomal protein uL30 family. In terms of assembly, part of the 50S ribosomal subunit.

The polypeptide is Large ribosomal subunit protein uL30 (Methanocaldococcus jannaschii (strain ATCC 43067 / DSM 2661 / JAL-1 / JCM 10045 / NBRC 100440) (Methanococcus jannaschii)).